Reading from the N-terminus, the 1742-residue chain is Unconventional myosin-Vc (1742 aa).

Position 2 is an N-acetylalanine (Ala-2). The Myosin N-terminal SH3-like domain occupies 8 to 62; that stretch reads TQYNRVWIPDPEEVWKSAEIAKDYRVGDKVLRLLLEDGTELDYSVNPESLPPLRN. The region spanning 67-753 is the Myosin motor domain; sequence VGENDLTALS…QVAYLEKLRL (687 aa). 161-168 provides a ligand contact to ATP; the sequence is GESGAGKT. The actin-binding stretch occupies residues 632–654; it reads LYLLMETLNATTPHYVRCIKPND. 5 IQ domains span residues 756-779, 780-806, 807-829, 830-854, and 855-884; these read LRQS…FLRE, RRAA…VALK, EAWA…LYQL, IRMA…RKML, and EEHK…FVLN. Residues 884 to 1351 are a coiled coil; that stretch reads NIQLTYRVQR…SKTIGKANDV (468 aa). The Dilute domain occupies 1421–1697; it reads NSTINGIKQV…VRKVQALLNS (277 aa).

The protein belongs to the TRAFAC class myosin-kinesin ATPase superfamily. Myosin family. In terms of tissue distribution, expressed chiefly in non-neuronal tissues. Particularly abundant in epithelial and glandular tissues including pancreas, prostate, mammary, stomach, colon and lung.

Its function is as follows. May be involved in transferrin trafficking. Likely to power actin-based membrane trafficking in many physiologically crucial tissues. The sequence is that of Unconventional myosin-Vc (MYO5C) from Homo sapiens (Human).